We begin with the raw amino-acid sequence, 529 residues long: 1,4-beta-D-glucan cellobiohydrolase xynA (529 aa).

Residues 1-25 (MSALNSFNMYKSALILGSLLATAGA) form the signal peptide. The segment at 26–456 (QQIGTYTAET…SDIKVGPFNS (431 aa)) is catalytic. N-linked (GlcNAc...) asparagine glycosylation is found at N70 and N219. The active-site Nucleophile is E234. Catalysis depends on E239, which acts as the Proton donor. N413 carries N-linked (GlcNAc...) asparagine glycosylation. The interval 413 to 438 (NETGTPGAARGSCPTTSGNPKTVESQ) is disordered. Polar residues predominate over residues 425–438 (CPTTSGNPKTVESQ). Residue N455 is glycosylated (N-linked (GlcNAc...) asparagine). Positions 457-493 (TFSGGTSTGGSTTTTASGTTSTKASTTSTSSTSTGTG) are thr-rich linker. The tract at residues 460–491 (GGTSTGGSTTTTASGTTSTKASTTSTSSTSTG) is disordered. One can recognise a CBM1 domain in the interval 493-529 (GVAAHWGQCGGQGWTGPTTCASGTTCTVVNPYYSQCL). Intrachain disulfides connect C501/C518 and C512/C528.

Belongs to the glycosyl hydrolase 7 (cellulase C) family.

It is found in the secreted. The catalysed reaction is Hydrolysis of (1-&gt;4)-beta-D-glucosidic linkages in cellulose and cellotetraose, releasing cellobiose from the non-reducing ends of the chains.. With respect to regulation, cellobiose inhibits xynA at high concentrations. The biological conversion of cellulose to glucose generally requires three types of hydrolytic enzymes: (1) Endoglucanases which cut internal beta-1,4-glucosidic bonds; (2) Exocellobiohydrolases that cut the disaccharide cellobiose from the non-reducing end of the cellulose polymer chain; (3) Beta-1,4-glucosidases which hydrolyze the cellobiose and other short cello-oligosaccharides to glucose. The sequence is that of 1,4-beta-D-glucan cellobiohydrolase xynA (xynA) from Talaromyces funiculosus (Fruitlet core rot fungus).